Reading from the N-terminus, the 347-residue chain is DnaJ homolog subfamily C member 22 (347 aa).

A TM2 domain is found at 4-50 (GLLMTYTLWAVGGPAGLHHLYLGRDSHALLWMLTLGGGGLGWLWEFW). The next 7 membrane-spanning stretches (helical) occupy residues 5-25 (LLMTYTLWAVGGPAGLHHLYL), 32-52 (LLWMLTLGGGGLGWLWEFWML), 81-101 (FVAQMIVGMYFGLVALISLSF), 105-125 (FYIVGLPLAVGLGVLLVAAVG), 135-155 (LGAAFLTSPIFYGRPIAILPI), 186-206 (GLAYLAFTGPLVHSVLCHTAV), and 218-238 (FLSWFSFFPLLGRLLESVLLL). In terms of domain architecture, J spans 277–347 (LALQVFGLSE…GSWRWEETSF (71 aa)).

The protein localises to the membrane. In terms of biological role, may function as a co-chaperone. The sequence is that of DnaJ homolog subfamily C member 22 (DNAJC22) from Bos taurus (Bovine).